A 432-amino-acid chain; its full sequence is MRKIKGLRWYMIALVTLGTVLGYLTRNTVAAAAPTLMEELNISTQQYSYIIAAYSAAYTVMQPVAGYVLDVLGTKIGYAMFAVLWAVFCGATALAGSWGGLAVARGAVGAAEAAMIPAGLKASSEWFPAKERSIAVGYFNVGSSIGAMIAPPLVVWAIVMHSWQMAFIISGALSFIWAMAWLIFYKHPRDQKHLTDEERDYIINGQEAQHQVSTAKKMSVGQILRNRQFWGIALPRFLAEPAWGTFNAWIPLFMFKVYGFNLKEIAMFAWMPMLFADLGCILGGYLPPLFQRWFGVNLIVSRKMVVTLGAVLMIGPGMIGLFTNPYVAIMLLCIGGFAHQALSGALITLSSDVFGRNEVATANGLTGMSAWLASTLFALVVGALADTIGFSPLFAVLAVFDLLGALVIWTVLQNKPAIEVAQETHNDPAPQH.

The first 31 residues, 1–31 (MRKIKGLRWYMIALVTLGTVLGYLTRNTVAA), serve as a signal peptide directing secretion. The Periplasmic portion of the chain corresponds to 33 to 48 (APTLMEELNISTQQYS). Residues 49–69 (YIIAAYSAAYTVMQPVAGYVL) traverse the membrane as a helical segment. Topologically, residues 70 to 75 (DVLGTK) are cytoplasmic. Residues 76–96 (IGYAMFAVLWAVFCGATALAG) form a helical membrane-spanning segment. The Periplasmic segment spans residues 97–99 (SWG). The helical transmembrane segment at 100-120 (GLAVARGAVGAAEAAMIPAGL) threads the bilayer. The Cytoplasmic segment spans residues 121–138 (KASSEWFPAKERSIAVGY). A helical transmembrane segment spans residues 139-159 (FNVGSSIGAMIAPPLVVWAIV). The Periplasmic portion of the chain corresponds to 160-164 (MHSWQ). Residues 165–185 (MAFIISGALSFIWAMAWLIFY) traverse the membrane as a helical segment. Over 186-236 (KHPRDQKHLTDEERDYIINGQEAQHQVSTAKKMSVGQILRNRQFWGIALPR) the chain is Cytoplasmic. Residues 237–257 (FLAEPAWGTFNAWIPLFMFKV) traverse the membrane as a helical segment. The Periplasmic segment spans residues 258–264 (YGFNLKE). The chain crosses the membrane as a helical span at residues 265-285 (IAMFAWMPMLFADLGCILGGY). Residues 286-293 (LPPLFQRW) lie on the Cytoplasmic side of the membrane. A helical membrane pass occupies residues 294 to 314 (FGVNLIVSRKMVVTLGAVLMI). The Periplasmic segment spans residues 315-317 (GPG). The chain crosses the membrane as a helical span at residues 318 to 338 (MIGLFTNPYVAIMLLCIGGFA). Residues 339–369 (HQALSGALITLSSDVFGRNEVATANGLTGMS) lie on the Cytoplasmic side of the membrane. A helical transmembrane segment spans residues 370 to 390 (AWLASTLFALVVGALADTIGF). A topological domain (periplasmic) is located at residue Ser391. The chain crosses the membrane as a helical span at residues 392 to 412 (PLFAVLAVFDLLGALVIWTVL). Residues 413 to 432 (QNKPAIEVAQETHNDPAPQH) are Cytoplasmic-facing.

This sequence belongs to the major facilitator superfamily. Phthalate permease family.

The protein resides in the cell inner membrane. It carries out the reaction aldehydo-D-glucuronate(in) + H(+)(in) = aldehydo-D-glucuronate(out) + H(+)(out). The catalysed reaction is aldehydo-D-galacturonate(out) + H(+)(out) = aldehydo-D-galacturonate(in) + H(+)(in). In terms of biological role, transport of aldohexuronates such as D-glucuronate and D-galacturonate. In Escherichia coli O157:H7, this protein is Hexuronate transporter (exuT).